We begin with the raw amino-acid sequence, 274 residues long: Chemotaxis protein methyltransferase 1 (274 aa).

The CheR-type methyltransferase domain occupies 1–274 (MSAANADFEL…CSPGIIYRAK (274 aa)). Residues N72, T74, R78, E115, D144, 200 to 201 (NL), and 217 to 218 (RN) contribute to the S-adenosyl-L-methionine site.

The catalysed reaction is L-glutamyl-[protein] + S-adenosyl-L-methionine = [protein]-L-glutamate 5-O-methyl ester + S-adenosyl-L-homocysteine. Its function is as follows. Methylation of the membrane-bound methyl-accepting chemotaxis proteins (MCP) to form gamma-glutamyl methyl ester residues in MCP. The polypeptide is Chemotaxis protein methyltransferase 1 (cheR1) (Pseudomonas aeruginosa (strain ATCC 15692 / DSM 22644 / CIP 104116 / JCM 14847 / LMG 12228 / 1C / PRS 101 / PAO1)).